Here is a 397-residue protein sequence, read N- to C-terminus: Decapping and exoribonuclease protein (397 aa).

The span at M1–A10 shows a compositional bias: basic residues. Positions M1–R30 are disordered. Residues R58, E101, and W131–G133 contribute to the substrate site. M185 lines the adenosine 3',5'-bisphosphate pocket. Residue E192 participates in Mg(2+) binding. Residues C217 and E234 each coordinate substrate. 4 residues coordinate Mg(2+): E234, D236, E253, and L254. An adenosine 3',5'-bisphosphate-binding site is contributed by D236. The segment at E253–T256 is adenosine 3',5'-bisphosphate; inhibitor. The substrate site is built by K255 and Q280. Q280 contacts adenosine 3',5'-bisphosphate. The residue at position 392 (T392) is a Phosphothreonine. Phosphoserine is present on S394.

Belongs to the DXO/Dom3Z family. Mg(2+) is required as a cofactor.

It is found in the nucleus. It catalyses the reaction a 5'-end triphospho-ribonucleoside in mRNA + H2O = a 5'-end phospho-ribonucleoside in mRNA + diphosphate + H(+). The catalysed reaction is a 5'-end NAD(+)-phospho-ribonucleoside in mRNA + H2O = a 5'-end phospho-ribonucleoside in mRNA + NAD(+) + H(+). It carries out the reaction a 5'-end NAD(+)-phospho-ribonucleoside in snoRNA + H2O = a 5'-end phospho-ribonucleoside in snoRNA + NAD(+) + H(+). The enzyme catalyses a 5'-end (N(7)-methyl 5'-triphosphoguanosine)-ribonucleoside-ribonucleotide in mRNA + H2O = a (N(7)-methyl 5'-triphosphoguanosine)-nucleoside + a 5'-end phospho-ribonucleoside in mRNA + H(+). It catalyses the reaction a 5'-end FAD-phospho-ribonucleoside in mRNA + H2O = a 5'-end phospho-ribonucleoside in mRNA + FAD + H(+). The catalysed reaction is a 5'-end CoA-ribonucleoside in mRNA + H2O = 3'-dephospho-CoA + a 5'-end phospho-ribonucleoside in mRNA + H(+). With respect to regulation, the 5'-3' exoribonuclease activity is inhibited by adenosine 3',5'-bisphosphate. Functionally, decapping enzyme for NAD-capped RNAs: specifically hydrolyzes the nicotinamide adenine dinucleotide (NAD) cap from a subset of RNAs by removing the entire NAD moiety from the 5'-end of an NAD-capped RNA. The NAD-cap is present at the 5'-end of some RNAs and snoRNAs. In contrast to the canonical 5'-end N7 methylguanosine (m7G) cap, the NAD cap promotes mRNA decay. Preferentially acts on NAD-capped transcripts in response to environmental stress. Also acts as a non-canonical decapping enzyme that removes the entire cap structure of m7G capped or incompletely capped RNAs and mediates their subsequent degradation. Specifically degrades pre-mRNAs with a defective 5'-end m7G cap and is part of a pre-mRNA capping quality control. Has decapping activity toward incomplete 5'-end m7G cap mRNAs such as unmethylated 5'-end-capped RNA (cap0), while it has no activity toward 2'-O-ribose methylated m7G cap (cap1). In contrast to canonical decapping enzymes DCP2 and NUDT16, which cleave the cap within the triphosphate linkage, the decapping activity releases the entire cap structure GpppN and a 5'-end monophosphate RNA. Also has 5'-3' exoribonuclease activities: The 5'-end monophosphate RNA is then degraded by the 5'-3' exoribonuclease activity, enabling this enzyme to decap and degrade incompletely capped mRNAs. Also possesses RNA 5'-pyrophosphohydrolase activity by hydrolyzing the 5'-end triphosphate to release pyrophosphates. Exhibits decapping activity towards FAD-capped RNAs. Exhibits decapping activity towards dpCoA-capped RNAs in vitro. The chain is Decapping and exoribonuclease protein from Mus musculus (Mouse).